Consider the following 622-residue polypeptide: 1-deoxy-D-xylulose-5-phosphate synthase (622 aa).

Thiamine diphosphate contacts are provided by residues histidine 80 and glycine 121–serine 123. Residue aspartate 152 participates in Mg(2+) binding. Thiamine diphosphate-binding positions include glycine 153–alanine 154, asparagine 181, tyrosine 288, and glutamate 369. Asparagine 181 provides a ligand contact to Mg(2+).

It belongs to the transketolase family. DXPS subfamily. Homodimer. Mg(2+) serves as cofactor. Requires thiamine diphosphate as cofactor.

The enzyme catalyses D-glyceraldehyde 3-phosphate + pyruvate + H(+) = 1-deoxy-D-xylulose 5-phosphate + CO2. The protein operates within metabolic intermediate biosynthesis; 1-deoxy-D-xylulose 5-phosphate biosynthesis; 1-deoxy-D-xylulose 5-phosphate from D-glyceraldehyde 3-phosphate and pyruvate: step 1/1. In terms of biological role, catalyzes the acyloin condensation reaction between C atoms 2 and 3 of pyruvate and glyceraldehyde 3-phosphate to yield 1-deoxy-D-xylulose-5-phosphate (DXP). This chain is 1-deoxy-D-xylulose-5-phosphate synthase, found in Psychromonas ingrahamii (strain DSM 17664 / CCUG 51855 / 37).